Consider the following 208-residue polypeptide: Putative thymidylate kinase (208 aa).

The segment at 8–15 is defective ATP-binding; sequence GIDGSGVS.

Belongs to the thymidylate kinase family.

The enzyme catalyses dTMP + ATP = dTDP + ADP. The polypeptide is Putative thymidylate kinase (tmk) (Aeropyrum pernix (strain ATCC 700893 / DSM 11879 / JCM 9820 / NBRC 100138 / K1)).